An 807-amino-acid polypeptide reads, in one-letter code: SWI/SNF complex subunit SWI3C (807 aa).

The tract at residues 1 to 74 (MPASEDRRGK…DPGLGIGEVV (74 aa)) is disordered. Residues 28–54 (EEEDMEEEDEENNNNNNEEMDDVENAD) are compositionally biased toward acidic residues. The SWIRM domain maps to 176-274 (HVLPMHSDWF…YCATAQSHPG (99 aa)). A ZZ-type; degenerate zinc finger spans residues 340–394 (LCDSHCNHCSRPLPTVYFQSQKKGDILLCCDCFHHGRFVVGHSCLDFVRVDPMKF). Zn(2+) contacts are provided by Cys-345, Cys-348, Cys-368, and Cys-371. Residues 398-449 (QDGDNWTDQETLLLLEAVELYNENWVQIADHVGSKSKAQCILHFLRLPVEDG) enclose the SANT domain. Polar residues-rich tracts occupy residues 458–467 (GVTNTENPTN) and 552–569 (ENQQ…NGAE). 2 disordered regions span residues 458–487 (GVTN…SEQG) and 549–571 (LDGE…AEAQ). The stretch at 598 to 656 (ADHEEREIQRLSANIVNHQLKRMELKLKQFAEIETLLMKECEQVEKTRQRFSAERARML) forms a coiled coil. Low complexity-rich tracts occupy residues 692–703 (QHQQQQASATSQ) and 726–739 (QQQQ…QQQQ). 3 disordered regions span residues 692–713 (QHQQ…FSNN), 721–740 (HFMA…QQQA), and 781–807 (SINQ…LGLN). Positions 798-807 (SGSGSGLGLN) are enriched in gly residues.

As to quaternary structure, heterodimer. Interacts with SWI3A, SWI3B and BRM, but not with BSH. Interacts with MORC6 and SUVH9. In terms of tissue distribution, expressed in roots, stems, leaves, flowers and siliques.

It localises to the nucleus. Its function is as follows. Component of a multiprotein complex equivalent of the SWI/SNF complex, an ATP-dependent chromatin-remodeling complex, which is required for the positive and negative regulation of gene expression of a large number of genes. It changes chromatin structure by altering DNA-histone contacts within a nucleosome, leading eventually to a change in nucleosome position, thus facilitating or repressing binding of gene-specific transcription factors. The polypeptide is SWI/SNF complex subunit SWI3C (SWI3C) (Arabidopsis thaliana (Mouse-ear cress)).